Here is a 238-residue protein sequence, read N- to C-terminus: Ribonuclease 3 (238 aa).

The 130-residue stretch at 10-139 (FKQFQEQTGI…FIGALYLDQG (130 aa)) folds into the RNase III domain. Glu52 contacts Mg(2+). Asp56 is a catalytic residue. Asp125 and Glu128 together coordinate Mg(2+). Glu128 is an active-site residue. The region spanning 165-234 (DYKSQLQEFV…AQMALAKLKQ (70 aa)) is the DRBM domain.

Belongs to the ribonuclease III family. Homodimer. Requires Mg(2+) as cofactor.

It localises to the cytoplasm. The enzyme catalyses Endonucleolytic cleavage to 5'-phosphomonoester.. Digests double-stranded RNA. Involved in the processing of primary rRNA transcript to yield the immediate precursors to the large and small rRNAs (23S and 16S). Processes some mRNAs, and tRNAs when they are encoded in the rRNA operon. Processes pre-crRNA and tracrRNA of type II CRISPR loci if present in the organism. This is Ribonuclease 3 from Anoxybacillus flavithermus (strain DSM 21510 / WK1).